Here is a 1124-residue protein sequence, read N- to C-terminus: EGF and laminin G domain-containing protein (1124 aa).

Residues 1–1055 (RTFVKKYSAS…KLQAEDDDKT (1055 aa)) lie on the Extracellular side of the membrane. 2 Laminin G-like domains span residues 8–203 (SASR…NQKC) and 210–369 (PFTF…WSGC). 9 cysteine pairs are disulfide-bonded: cysteine 167-cysteine 203, cysteine 342-cysteine 369, cysteine 375-cysteine 386, cysteine 380-cysteine 395, cysteine 397-cysteine 412, cysteine 761-cysteine 788, cysteine 792-cysteine 803, cysteine 797-cysteine 812, and cysteine 814-cysteine 824. An EGF-like 1 domain is found at 371–413 (ITDFCIFSPCLHGGECTQTGKTFSCGCSGTGYDKGPNSLSVCQ). The Laminin G-like 3 domain occupies 621–788 (NTATFVNEDG…GEAVFVKSGC (168 aa)). Positions 789 to 825 (GAACENNSCKNHAKCLDNYNVYFCDCSKTPYYGYFCH) constitute an EGF-like 2 domain. The tract at residues 1011 to 1047 (RATCGPEPKVPEIPTPRPVGQRADVSTPQGITTNPKL) is disordered. The span at 1034–1046 (DVSTPQGITTNPK) shows a compositional bias: polar residues. A helical transmembrane segment spans residues 1056–1076 (AIIVVVVLILVLLLVVLILVI). Topologically, residues 1077–1124 (YWYWARHKGEYHTHEDDEELKATDPYIEPAAPRKLKGEEPEKKKEWYI) are cytoplasmic. Positions 1090 to 1124 (HEDDEELKATDPYIEPAAPRKLKGEEPEKKKEWYI) are disordered. Basic and acidic residues predominate over residues 1111–1124 (LKGEEPEKKKEWYI).

In terms of tissue distribution, component of the acid-insoluble organic matrix of the aragonitic skeleton (at protein level).

Its subcellular location is the membrane. The sequence is that of EGF and laminin G domain-containing protein from Acropora millepora (Staghorn coral).